The chain runs to 264 residues: NAD kinase 1 (264 aa).

D45 acts as the Proton acceptor in catalysis. NAD(+) is bound by residues 45 to 46, 122 to 123, R148, D150, 161 to 166, and A185; these read DG, NE, and TAYNKS.

Belongs to the NAD kinase family. It depends on a divalent metal cation as a cofactor.

It localises to the cytoplasm. The enzyme catalyses NAD(+) + ATP = ADP + NADP(+) + H(+). Involved in the regulation of the intracellular balance of NAD and NADP, and is a key enzyme in the biosynthesis of NADP. Catalyzes specifically the phosphorylation on 2'-hydroxyl of the adenosine moiety of NAD to yield NADP. This is NAD kinase 1 from Listeria monocytogenes serotype 4b (strain F2365).